The following is a 323-amino-acid chain: Methenyltetrahydromethanopterin cyclohydrolase (323 aa).

The protein belongs to the MCH family.

The protein resides in the cytoplasm. The enzyme catalyses 5,10-methenyl-5,6,7,8-tetrahydromethanopterin + H2O = N(5)-formyl-5,6,7,8-tetrahydromethanopterin + H(+). Its pathway is one-carbon metabolism; methanogenesis from CO(2); 5,10-methenyl-5,6,7,8-tetrahydromethanopterin from CO(2): step 3/3. In terms of biological role, catalyzes the reversible interconversion of 5-formyl-H(4)MPT to methenyl-H(4)MPT(+). This chain is Methenyltetrahydromethanopterin cyclohydrolase, found in Methanococcus maripaludis (strain C7 / ATCC BAA-1331).